Reading from the N-terminus, the 137-residue chain is ATP synthase epsilon chain, chloroplastic (137 aa).

This sequence belongs to the ATPase epsilon chain family. F-type ATPases have 2 components, CF(1) - the catalytic core - and CF(0) - the membrane proton channel. CF(1) has five subunits: alpha(3), beta(3), gamma(1), delta(1), epsilon(1). CF(0) has three main subunits: a, b and c.

Its subcellular location is the plastid. It localises to the chloroplast thylakoid membrane. Produces ATP from ADP in the presence of a proton gradient across the membrane. The protein is ATP synthase epsilon chain, chloroplastic of Sorghum bicolor (Sorghum).